The sequence spans 185 residues: Ribose 1,5-bisphosphate phosphokinase PhnN (185 aa).

10-17 (GPSGSGKD) serves as a coordination point for ATP.

Belongs to the ribose 1,5-bisphosphokinase family.

The enzyme catalyses alpha-D-ribose 1,5-bisphosphate + ATP = 5-phospho-alpha-D-ribose 1-diphosphate + ADP. It functions in the pathway metabolic intermediate biosynthesis; 5-phospho-alpha-D-ribose 1-diphosphate biosynthesis; 5-phospho-alpha-D-ribose 1-diphosphate from D-ribose 5-phosphate (route II): step 3/3. Functionally, catalyzes the phosphorylation of ribose 1,5-bisphosphate to 5-phospho-D-ribosyl alpha-1-diphosphate (PRPP). Accepts ATP but not GTP as a phosphoryl donor, and uses ribose 1,5-bisphosphate but not ribose, ribose 1-phosphate, or ribose 5-phosphate as a phosphoryl acceptor. The sequence is that of Ribose 1,5-bisphosphate phosphokinase PhnN (phnN) from Escherichia coli (strain K12).